We begin with the raw amino-acid sequence, 257 residues long: Aspartate/glutamate leucyltransferase (257 aa).

This sequence belongs to the R-transferase family. Bpt subfamily.

It is found in the cytoplasm. It catalyses the reaction N-terminal L-glutamyl-[protein] + L-leucyl-tRNA(Leu) = N-terminal L-leucyl-L-glutamyl-[protein] + tRNA(Leu) + H(+). It carries out the reaction N-terminal L-aspartyl-[protein] + L-leucyl-tRNA(Leu) = N-terminal L-leucyl-L-aspartyl-[protein] + tRNA(Leu) + H(+). Its function is as follows. Functions in the N-end rule pathway of protein degradation where it conjugates Leu from its aminoacyl-tRNA to the N-termini of proteins containing an N-terminal aspartate or glutamate. The polypeptide is Aspartate/glutamate leucyltransferase (Nitrobacter hamburgensis (strain DSM 10229 / NCIMB 13809 / X14)).